The chain runs to 204 residues: MTTFLQRDDFAVTARVLGALFYYSPESHETAPLVQALLNDDWQAQWPLDAEALAPVAAMFKTHSEESLPQAWQRLFIGPYALPSPPWGSVWLDRESVLFGDSTLALRQWMRENGIQFEMQQNEPEDHFGALLLLAAWLAENGRHHECEQLLAWHLFPWSPRFLDVFIDHAGHPFYQALGQLARLTLAQWQAQLIIPVAVKPLFR.

This sequence belongs to the TorD/DmsD family. DmsD subfamily.

Required for biogenesis/assembly of DMSO reductase, but not for the interaction of the DmsA signal peptide with the Tat system. May be part of a chaperone cascade complex that facilitates a folding-maturation pathway for the substrate protein. The sequence is that of Tat proofreading chaperone DmsD from Salmonella typhi.